We begin with the raw amino-acid sequence, 254 residues long: Triosephosphate isomerase (254 aa).

9 to 11 (NWK) lines the substrate pocket. Histidine 96 (electrophile) is an active-site residue. Catalysis depends on glutamate 169, which acts as the Proton acceptor. Substrate contacts are provided by residues glycine 175, serine 215, and 236–237 (GG).

This sequence belongs to the triosephosphate isomerase family. Homodimer.

It localises to the cytoplasm. It catalyses the reaction D-glyceraldehyde 3-phosphate = dihydroxyacetone phosphate. The protein operates within carbohydrate biosynthesis; gluconeogenesis. It participates in carbohydrate degradation; glycolysis; D-glyceraldehyde 3-phosphate from glycerone phosphate: step 1/1. Its function is as follows. Involved in the gluconeogenesis. Catalyzes stereospecifically the conversion of dihydroxyacetone phosphate (DHAP) to D-glyceraldehyde-3-phosphate (G3P). The protein is Triosephosphate isomerase of Borrelia duttonii (strain Ly).